Reading from the N-terminus, the 126-residue chain is UPF0102 protein PMT_0624 (126 aa).

It belongs to the UPF0102 family.

In Prochlorococcus marinus (strain MIT 9313), this protein is UPF0102 protein PMT_0624.